The following is a 259-amino-acid chain: tRNA (guanine-N(7)-)-methyltransferase (259 aa).

The tract at residues 1–73 (MGHHGQMHAQ…GPAEDPDRPG (73 aa)) is disordered. Residues Glu91, Glu116, Asn143, and Asp166 each contribute to the S-adenosyl-L-methionine site. The active site involves Asp166. Substrate-binding positions include Lys170, Asp202, and 238-241 (TKYE).

Belongs to the class I-like SAM-binding methyltransferase superfamily. TrmB family.

It carries out the reaction guanosine(46) in tRNA + S-adenosyl-L-methionine = N(7)-methylguanosine(46) in tRNA + S-adenosyl-L-homocysteine. It participates in tRNA modification; N(7)-methylguanine-tRNA biosynthesis. Its function is as follows. Catalyzes the formation of N(7)-methylguanine at position 46 (m7G46) in tRNA. This chain is tRNA (guanine-N(7)-)-methyltransferase, found in Mycolicibacterium paratuberculosis (strain ATCC BAA-968 / K-10) (Mycobacterium paratuberculosis).